A 1015-amino-acid polypeptide reads, in one-letter code: SKI family transcriptional corepressor 2 (1015 aa).

Disordered stretches follow at residues 280–316 and 518–934; these read HLLG…DDDD and GAAG…KKDV. Over residues 284–295 the composition is skewed to pro residues; sequence APPPPPPPPPPL. The segment covering 575–600 has biased composition (low complexity); that stretch reads PPADSVAAAGAGAAAAGSGPAGSRVP. Basic and acidic residues predominate over residues 628-637; that stretch reads GGKDDAESLA. A compositionally biased stretch (basic residues) spans 653-669; that stretch reads HPHHHHHPHHHHHHHHP. 2 stretches are compositionally biased toward pro residues: residues 670-684 and 694-708; these read PQPP…PQPD and APPP…PPLA. Acidic residues-rich tracts occupy residues 730–745 and 754–774; these read DSSE…QEVD and GEEE…EETE. A compositionally biased stretch (basic and acidic residues) spans 793–803; the sequence is PSEKGSSRDRA. Residues 832-842 are compositionally biased toward pro residues; that stretch reads DLPPPPPPPLA. 3 stretches are compositionally biased toward basic and acidic residues: residues 861–877, 885–899, and 912–922; these read PSLE…KTKE, TKDD…KEHS, and FWRERSGEHTQ.

This sequence belongs to the SKI family. As to quaternary structure, interacts with SMAD2 and SMAD3. Expressed in cerebellum, spinal cord and testis. Isoform 2 is present in cerebellum (at protein level).

It localises to the nucleus. The protein localises to the cytoplasm. In terms of biological role, exhibits transcriptional repressor activity. Acts as a TGF-beta antagonist in the nervous system. This Homo sapiens (Human) protein is SKI family transcriptional corepressor 2.